The following is a 496-amino-acid chain: MGQLISFFQEIPVFLQEALNIALVAVSLIAVIKGIINLYKSGLFQFIFFLLLAGRSCSDGTFKIGLHTEFQSVTLTMQRLLANHSNELPSLCMLNNSFYYMKGGVNTFLIRVSDISVLMKEHDVSIYEPEDLGNCLNKSDSSWAIHWFSNALGHDWLMDPPMLCRNKTKKEGSNIQFNISKADDVRVYGKKIRNGMRHLFRGFHDPCEEGKKCYLTINQCGDPSSFDYCGMDHLSKCQFDHVNTLHFLVRSKTHLNFERSLKAFFSWSLTDSSGKDMPGGYCLEEWMLIAAKMKCFGNTAVAKCNQNHDSEFCDMLRLFDYNKNAIKTLNDESKKEINLLSQTVNALISDNLLMKNKIKELMSIPYCNYTKFWYVNHTLTGQHTLPRCWLIRNGSYLNTSEFRNDWILESDHLISEMLSKEYAERQGKTPITLVDICFWSTVFFTASLFLHLVGIPTHRHLKGEACPLPHKLDSFGGCRCGKYPRLRKPTIWHKRH.

The N-myristoyl glycine; by host moiety is linked to residue Gly2. Residues 2-17 are Extracellular-facing; the sequence is GQLISFFQEIPVFLQE. Residues 18–32 traverse the membrane as a helical segment; that stretch reads ALNIALVAVSLIAVI. Position 33 (Lys33) is a topological domain, cytoplasmic. A helical transmembrane segment spans residues 34-53; it reads GIINLYKSGLFQFIFFLLLA. Extracellular segments follow at residues 54-58 and 59-435; these read GRSCS and DGTF…TLVD. A Zn(2+)-binding site is contributed by Cys57. Residues Asn83, Asn95, Asn137, Asn166, and Asn178 are each glycosylated (N-linked (GlcNAc...) asparagine; by host). 6 disulfides stabilise this stretch: Cys92–Cys237, Cys135–Cys164, Cys207–Cys213, Cys282–Cys295, Cys304–Cys313, and Cys367–Cys388. Asn368, Asn376, Asn393, and Asn398 each carry an N-linked (GlcNAc...) asparagine; by host glycan. The chain crosses the membrane as a helical span at residues 436–456; sequence ICFWSTVFFTASLFLHLVGIP. At 457 to 496 the chain is on the cytoplasmic side; sequence THRHLKGEACPLPHKLDSFGGCRCGKYPRLRKPTIWHKRH. 7 residues coordinate Zn(2+): His458, His460, Cys466, His470, Cys478, Cys480, and His496.

It belongs to the arenaviridae GPC protein family. In terms of assembly, homotetramer; disulfide-linked. Interacts with host TFRC. Homotetramer. GP2 homotetramers bind through ionic interactions with GP1 homotetramers to form the GP complex together with the stable signal peptide. The GP-C polyprotein interacts with the host protease MBTPS1/SKI-1 resulting in the polyprotein processing. Specific enzymatic cleavages in vivo yield mature proteins. GP-C polyprotein is cleaved in the endoplasmic reticulum by the host protease MBTPS1. Only cleaved glycoprotein is incorporated into virions. Post-translationally, the SSP remains stably associated with the GP complex following cleavage by signal peptidase and plays crucial roles in the trafficking of GP through the secretory pathway. In terms of processing, myristoylation is necessary for GP2-mediated fusion activity.

The protein localises to the virion membrane. It is found in the host endoplasmic reticulum membrane. It localises to the host Golgi apparatus membrane. Its subcellular location is the host cell membrane. Functionally, class I viral fusion protein that directs fusion of viral and host endosomal membranes, leading to delivery of the nucleocapsid into the cytoplasm. Membrane fusion is mediated by irreversible conformational changes induced upon acidification in the endosome. Its function is as follows. Stable signal peptide (SSP): cleaved and functions as a signal peptide. In addition, it is also retained as the third component of the GP complex. The SSP is required for efficient glycoprotein expression, post-translational maturation cleavage of GP1 and GP2, glycoprotein transport to the cell surface plasma membrane, formation of infectious virus particles, and acid pH-dependent glycoprotein-mediated cell fusion. Interacts with the host receptor. Mediates virus attachment to host TFRC. This attachment induces virion internalization predominantly through clathrin-mediated endocytosis. The chain is Pre-glycoprotein polyprotein GP complex from Machupo virus (MACV).